A 337-amino-acid chain; its full sequence is Phosphatidate cytidylyltransferase, mitochondrial (337 aa).

Belongs to the TAM41 family. Requires Mg(2+) as cofactor.

The protein resides in the mitochondrion inner membrane. It catalyses the reaction a 1,2-diacyl-sn-glycero-3-phosphate + CTP + H(+) = a CDP-1,2-diacyl-sn-glycerol + diphosphate. The protein operates within phospholipid metabolism; CDP-diacylglycerol biosynthesis; CDP-diacylglycerol from sn-glycerol 3-phosphate: step 3/3. Catalyzes the conversion of phosphatidic acid (PA) to CDP-diacylglycerol (CDP-DAG), an essential intermediate in the synthesis of phosphatidylglycerol, cardiolipin and phosphatidylinositol. The protein is Phosphatidate cytidylyltransferase, mitochondrial (Tamm41) of Mus musculus (Mouse).